Here is a 108-residue protein sequence, read N- to C-terminus: MSDTHDDRVKQLVEFLDPLVDDSFKIKFNELSKYSKEELKQHTQKLEDWALALGVAEQKQLQTGRLLGIISDFNEFNCENTNHHQQQQNHQNQQQQQQQPNGIFENNI.

The segment at 81–108 is disordered; the sequence is TNHHQQQQNHQNQQQQQQQPNGIFENNI. Residues 83-99 are compositionally biased toward low complexity; it reads HHQQQQNHQNQQQQQQQ.

This is an uncharacterized protein from Dictyostelium discoideum (Social amoeba).